The following is a 264-amino-acid chain: S-adenosylmethionine decarboxylase proenzyme (264 aa).

Catalysis depends on Ser112, which acts as the Schiff-base intermediate with substrate; via pyruvic acid. A Pyruvic acid (Ser); by autocatalysis modification is found at Ser112. His117 serves as the catalytic Proton acceptor; for processing activity. Catalysis depends on Cys140, which acts as the Proton donor; for catalytic activity.

Belongs to the prokaryotic AdoMetDC family. Type 2 subfamily. In terms of assembly, heterooctamer of four alpha and four beta chains arranged as a tetramer of alpha/beta heterodimers. The cofactor is pyruvate. In terms of processing, is synthesized initially as an inactive proenzyme. Formation of the active enzyme involves a self-maturation process in which the active site pyruvoyl group is generated from an internal serine residue via an autocatalytic post-translational modification. Two non-identical subunits are generated from the proenzyme in this reaction, and the pyruvate is formed at the N-terminus of the alpha chain, which is derived from the carboxyl end of the proenzyme. The post-translation cleavage follows an unusual pathway, termed non-hydrolytic serinolysis, in which the side chain hydroxyl group of the serine supplies its oxygen atom to form the C-terminus of the beta chain, while the remainder of the serine residue undergoes an oxidative deamination to produce ammonia and the pyruvoyl group blocking the N-terminus of the alpha chain.

It carries out the reaction S-adenosyl-L-methionine + H(+) = S-adenosyl 3-(methylsulfanyl)propylamine + CO2. The protein operates within amine and polyamine biosynthesis; S-adenosylmethioninamine biosynthesis; S-adenosylmethioninamine from S-adenosyl-L-methionine: step 1/1. Its function is as follows. Catalyzes the decarboxylation of S-adenosylmethionine to S-adenosylmethioninamine (dcAdoMet), the propylamine donor required for the synthesis of the polyamines spermine and spermidine from the diamine putrescine. The protein is S-adenosylmethionine decarboxylase proenzyme of Pectobacterium atrosepticum (strain SCRI 1043 / ATCC BAA-672) (Erwinia carotovora subsp. atroseptica).